Here is a 471-residue protein sequence, read N- to C-terminus: Trimethyllysine dioxygenase (471 aa).

The Fe cation site is built by His-251 and Asp-253. The tract at residues 272–302 (KAAPSRPPPPPPPPPPPSEEKEAAGSAAGEA) is disordered. The segment covering 276-288 (SRPPPPPPPPPPP) has biased composition (pro residues). His-430 lines the Fe cation pocket.

The protein belongs to the gamma-BBH/TMLD family. Fe(2+) serves as cofactor. It depends on L-ascorbate as a cofactor.

The protein resides in the cytoplasm. It catalyses the reaction N(6),N(6),N(6)-trimethyl-L-lysine + 2-oxoglutarate + O2 = (3S)-3-hydroxy-N(6),N(6),N(6)-trimethyl-L-lysine + succinate + CO2. It participates in amine and polyamine biosynthesis; carnitine biosynthesis. Converts trimethyllysine (TML) into hydroxytrimethyllysine (HTML). The chain is Trimethyllysine dioxygenase (cbs-1) from Neurospora crassa (strain ATCC 24698 / 74-OR23-1A / CBS 708.71 / DSM 1257 / FGSC 987).